Here is a 353-residue protein sequence, read N- to C-terminus: MANSLRNVNDYDPFKYRPSYFDLEAPTESFALGKFVDAIEVKQMALDAFSESSMVSIATSQLPKTAYTATSFIESEYYSFPYLFNDQKYYWDYFDYKIPAADFAVLELELDLNNQQDQQIKDHFIDPAIKAYKQLGDSTGLFATKPLTEYQNDTHYLLGYPVVPTDHTQLWECKQGAERFSYGYFYSNMARLTKNLRQGDPNAGSKTHIEYSNELLDKDSMDQGIVRFSTFLGANINYHDYDYRQQGYGLTLTDTNLPGGSSGSLVFNQDKKISSIYSAATESDSVGYAQLLRTPRDVNGISVVSQSYDLIFGDSNTKRYYAMFAKKQQTHLYSEILKSTDEQYRYVVDKQFN.

The protein belongs to the MG067/MG068/MG395 family.

This is an uncharacterized protein from Mycoplasma pneumoniae (strain ATCC 29342 / M129 / Subtype 1) (Mycoplasmoides pneumoniae).